The sequence spans 205 residues: Protein phosphatase inhibitor 2 (205 aa).

Positions 1-44 (MAASTASHRPIKGILKNKTSTTSSMVASAEQPRGNVDEELSKKS) are disordered. An N-acetylalanine modification is found at A2. Required for binding PPP1CC stretches follow at residues 12 to 17 (KGILKN) and 43 to 55 (KSQK…ILAT). Residues 17 to 26 (NKTSTTSSMV) are compositionally biased toward polar residues. Positions 35–44 (NVDEELSKKS) are enriched in basic and acidic residues. A Phosphoserine; by ATM modification is found at S44. Position 73 is a phosphothreonine; by GSK3 (T73). S87 bears the Phosphoserine mark. A phosphothreonine mark is found at T89 and T92. Residues 111–142 (EPKYRIQEQESSGEEDSDLSPEEREKKRQFEM) are disordered. Phosphoserine occurs at positions 121, 122, 127, and 130. The segment covering 121 to 130 (SSGEEDSDLS) has biased composition (acidic residues). Residues 131 to 142 (PEEREKKRQFEM) are compositionally biased toward basic and acidic residues. A required for binding PPP1CC catalytic center, displacing metal ions and inhibition of PPP1CC catalytic activity region spans residues 147–150 (HYNE). The segment at 163–205 (KDLHDDDEDEEMLETADGESMNTEESNQGSTPSDQQQNKLRSS) is disordered. A compositionally biased stretch (acidic residues) spans 167-179 (DDDEDEEMLETAD). A compositionally biased stretch (polar residues) spans 182 to 205 (SMNTEESNQGSTPSDQQQNKLRSS).

The protein belongs to the protein phosphatase inhibitor 2 family. In terms of assembly, heterodimer with PP1. In terms of processing, phosphorylation on Thr-73 by GSK3 activates PP1 by dissociating the PP1-PPP1R2 complex. Phosphorylation on Ser-44 by ATM activates PP1 by dissociating the PP1-PPP1R2 complex.

Its function is as follows. Inhibitor of protein-phosphatase 1. This chain is Protein phosphatase inhibitor 2 (PPP1R2), found in Homo sapiens (Human).